Consider the following 497-residue polypeptide: Serine hydroxymethyltransferase (497 aa).

Residues Leu176 and 180–182 (GHL) contribute to the (6S)-5,6,7,8-tetrahydrofolate site. Residue Lys289 is modified to N6-(pyridoxal phosphate)lysine.

Belongs to the SHMT family. As to quaternary structure, homodimer. The cofactor is pyridoxal 5'-phosphate.

It localises to the cytoplasm. The enzyme catalyses (6R)-5,10-methylene-5,6,7,8-tetrahydrofolate + glycine + H2O = (6S)-5,6,7,8-tetrahydrofolate + L-serine. It participates in one-carbon metabolism; tetrahydrofolate interconversion. Its pathway is amino-acid biosynthesis; glycine biosynthesis; glycine from L-serine: step 1/1. Catalyzes the reversible interconversion of serine and glycine with tetrahydrofolate (THF) serving as the one-carbon carrier. This reaction serves as the major source of one-carbon groups required for the biosynthesis of purines, thymidylate, methionine, and other important biomolecules. Also exhibits THF-independent aldolase activity toward beta-hydroxyamino acids, producing glycine and aldehydes, via a retro-aldol mechanism. The protein is Serine hydroxymethyltransferase of Chlamydia caviae (strain ATCC VR-813 / DSM 19441 / 03DC25 / GPIC) (Chlamydophila caviae).